The primary structure comprises 303 residues: N-acetyl-D-glucosamine kinase (303 aa).

ATP contacts are provided by residues 4-11 (GFDVGGTK) and 133-140 (GFGGGLIY). The Zn(2+) site is built by H157, C177, C179, and C184.

Belongs to the ROK (NagC/XylR) family. NagK subfamily.

It catalyses the reaction N-acetyl-D-glucosamine + ATP = N-acetyl-D-glucosamine 6-phosphate + ADP + H(+). It participates in cell wall biogenesis; peptidoglycan recycling. Functionally, catalyzes the phosphorylation of N-acetyl-D-glucosamine (GlcNAc) derived from cell-wall degradation, yielding GlcNAc-6-P. This is N-acetyl-D-glucosamine kinase from Vibrio vulnificus (strain CMCP6).